Reading from the N-terminus, the 552-residue chain is Histone deacetylase 15 (552 aa).

The RanBP2-type zinc-finger motif lies at 86-115; that stretch reads EFVKWCCVNCTMSNPGDMVHCCICGEHKES. The interval 149–462 is histone deacetylase; sequence STAVGFDERM…ATAVIKVLLG (314 aa). Histidine 277 (proton donor/acceptor) is an active-site residue. Aspartate 313, histidine 315, and aspartate 404 together coordinate Zn(2+).

This sequence belongs to the histone deacetylase family. HD type 2 subfamily. As to quaternary structure, interacts with PIF3 in the dark. Interacts with HY5. Interacts with MYB96. Forms homotetramers. Zn(2+) serves as cofactor. In terms of tissue distribution, expressed in stems, leaves, flowers, siliques and mature seeds.

It is found in the nucleus. It localises to the cytoplasm. The enzyme catalyses N(6)-acetyl-L-lysyl-[histone] + H2O = L-lysyl-[histone] + acetate. With respect to regulation, inhibited by trichostatin A (TSA), a well-known histone deacetylase inhibitor. Functionally, responsible for the deacetylation of lysine residues on the N-terminal part of the core histones (H2A, H2B, H3 and H4). Histone deacetylation gives a tag for epigenetic repression and plays an important role in transcriptional regulation, cell cycle progression and developmental events. Histone deacetylases act via the formation of large multiprotein complexes. Represses chlorophyll biosynthesis and photosynthesis in the dark. Is recruited by PIF3 to the promoters of chlorophyll biosynthetic and photosynthetic genes, and represses their transcription by histone deacetylation. Involved in the repression of hypocotyl cell elongation to promote photomorphogenesis. Is recruited by HY5 to the promoters of a subset of cell wall organization and auxin signaling-related genes, and represses gene expression by decreasing the levels of histone H4 acetylation in a light-dependent manner. Promotes abscisic acid (ABA) signaling. Is recruited by MYB96 to the promoters of a subset of Rho GTPase (ROP) genes, which repress ABA signaling at the early stages of signal transduction. Represses ROP expression by removing acetyl groups of histone H3 and H4 from the cognate regions, particularly in the presence of ABA. Represses the plant response to elevated ambient temperature by directly repressing warm temperature-responsive genes. The chain is Histone deacetylase 15 from Arabidopsis thaliana (Mouse-ear cress).